Here is a 229-residue protein sequence, read N- to C-terminus: Cytidylate kinase (229 aa).

12-20 (GPSGAGKGT) contacts ATP.

The protein belongs to the cytidylate kinase family. Type 1 subfamily.

The protein resides in the cytoplasm. The enzyme catalyses CMP + ATP = CDP + ADP. It carries out the reaction dCMP + ATP = dCDP + ADP. The chain is Cytidylate kinase from Serratia proteamaculans (strain 568).